The sequence spans 463 residues: MTDIDIDTIINRSLHALENSEYSEFDLLLNQLSYLIKQSVNSNNKTASKEQITRILDYTPNNFNQVESLRLYRGLLILVRNFAPLLDIDLFPIVANSFEKFLKALNQTSEWTDRIIEVYWQILANFQRNEFTEVANEFFGQWESKYKWKDIPVSVMSPVIHFLFRQFNTQDPHITNENLLSLLKLFETNHVMNAVYEIFTMIDFADTNNIGHDNKMFIHLLYDIITHESFQKWIEQQNEEETITKWLSLTSVIVQTKTDWNNYELIALLSWNGSLFMKYAPLINSNCNTTVNGEDDFGYVEDDISAITAIFAELSQFNATKQYFEHYEDLLPKLIFVFKWIHDNIEPITIKSSKIEEVGRYSSVKTNIITILSYLSYDSFQFQEKIRELGGLSLVLSNCIIDNNNPFIKEQAIVCLKYLLQKNPKNQQFVADLEAKKVVDDQVLSEVGYQVEVIDGKVAVKRK.

It belongs to the ataxin-10 family.

It localises to the cytoplasm. In terms of biological role, may play a role in the regulation of cytokinesis. This Candida albicans (strain SC5314 / ATCC MYA-2876) (Yeast) protein is Ataxin-10 homolog (CTR86).